The sequence spans 363 residues: Zinc finger protein 830 (363 aa).

An N-acetylalanine modification is found at alanine 2. Residues 16 to 40 (VNQEELRRLMREKQRLSTNRKRIES) adopt a coiled-coil conformation. Residues 53–75 (CALCNTPVKSELLWQTHVLGKQH) form a C2H2-type zinc finger. Residues 81 to 213 (ELKGAKGATQ…NPPKAPLVPH (133 aa)) form a disordered region. Positions 90–99 (QGPSTGTVPQ) are enriched in polar residues. The span at 104–115 (RATDVESQDAKK) shows a compositional bias: basic and acidic residues. Low complexity predominate over residues 129–143 (SASSANLDAARAAPS). Acidic residues predominate over residues 152–164 (DYDDEEEEEEEGG). Residues 165–184 (GEERRDSSKHLPDAQGKEHS) show a composition bias toward basic and acidic residues. The span at 189-205 (RETTSNVLPNDPFNTNP) shows a compositional bias: polar residues. Serine 216 carries the post-translational modification Phosphoserine. Residues 303-331 (IECYRRVEKLRNRQDEIKNKLKEVLTIKE) adopt a coiled-coil conformation. Residues serine 342 and serine 353 each carry the phosphoserine modification.

As to quaternary structure, component of the XAB2 complex, a multimeric protein complex composed of XAB2, PRPF19, AQR, ZNF830, ISY1, and PPIE; this complex binds preferentially to RNA. Interacts with XAB2. Identified in a pentameric intron-binding (IB) complex composed of AQR, XAB2, ISY1, ZNF830 and PPIE that is incorporated into the spliceosome as a preassembled complex. The IB complex does not contain PRPF19. Post-translationally, phosphorylated in response to DNA damage by the cell cycle checkpoint kinases ATR/ATM. In terms of tissue distribution, widely expressed at low level. Expressed in oocytes from primordial to antral follicles. Also detected in somatic cells of the ovary, namely, in granulosa cells from the pre-antral follicle stage onward.

It localises to the nucleus. Its subcellular location is the chromosome. The protein localises to the nucleus speckle. In terms of biological role, may play a role in pre-mRNA splicing as component of the spliceosome. Acts as an important regulator of the cell cycle that participates in the maintenance of genome integrity. During cell cycle progression in embryonic fibroblast, prevents replication fork collapse, double-strand break formation and cell cycle checkpoint activation. Controls mitotic cell cycle progression and cell survival in rapidly proliferating intestinal epithelium and embryonic stem cells. During the embryo preimplantation, controls different aspects of M phase. During early oocyte growth, plays a role in oocyte survival by preventing chromosomal breaks formation, activation of TP63 and reduction of transcription. In Mus musculus (Mouse), this protein is Zinc finger protein 830.